Consider the following 174-residue polypeptide: Small ribosomal subunit protein uS7c (174 aa).

The protein belongs to the universal ribosomal protein uS7 family. Part of the 30S ribosomal subunit.

The protein localises to the plastid. It localises to the chloroplast. In terms of biological role, one of the primary rRNA binding proteins, it binds directly to 16S rRNA where it nucleates assembly of the head domain of the 30S subunit. This Stigeoclonium helveticum (Green alga) protein is Small ribosomal subunit protein uS7c (rps7).